The primary structure comprises 98 residues: Alpha-elicitin DRE-alpha (98 aa).

3 disulfides stabilise this stretch: Cys-3/Cys-71, Cys-27/Cys-56, and Cys-51/Cys-95.

The protein belongs to the elicitin family.

Its subcellular location is the secreted. In terms of biological role, induces local and distal defense responses (incompatible hypersensitive reaction) in plants from the solanaceae and cruciferae families. Elicits leaf necrosis and causes the accumulation of pathogenesis-related proteins. Might interact with the lipidic molecules of the plasma membrane. In Phytophthora drechsleri, this protein is Alpha-elicitin DRE-alpha.